We begin with the raw amino-acid sequence, 365 residues long: UDP-N-acetylglucosamine--N-acetylmuramyl-(pentapeptide) pyrophosphoryl-undecaprenol N-acetylglucosamine transferase (365 aa).

UDP-N-acetyl-alpha-D-glucosamine contacts are provided by residues 10–12 (TGG), asparagine 128, arginine 170, serine 199, isoleucine 250, and glutamine 295.

This sequence belongs to the glycosyltransferase 28 family. MurG subfamily.

It localises to the cell inner membrane. The enzyme catalyses di-trans,octa-cis-undecaprenyl diphospho-N-acetyl-alpha-D-muramoyl-L-alanyl-D-glutamyl-meso-2,6-diaminopimeloyl-D-alanyl-D-alanine + UDP-N-acetyl-alpha-D-glucosamine = di-trans,octa-cis-undecaprenyl diphospho-[N-acetyl-alpha-D-glucosaminyl-(1-&gt;4)]-N-acetyl-alpha-D-muramoyl-L-alanyl-D-glutamyl-meso-2,6-diaminopimeloyl-D-alanyl-D-alanine + UDP + H(+). It participates in cell wall biogenesis; peptidoglycan biosynthesis. In terms of biological role, cell wall formation. Catalyzes the transfer of a GlcNAc subunit on undecaprenyl-pyrophosphoryl-MurNAc-pentapeptide (lipid intermediate I) to form undecaprenyl-pyrophosphoryl-MurNAc-(pentapeptide)GlcNAc (lipid intermediate II). In Prosthecochloris aestuarii (strain DSM 271 / SK 413), this protein is UDP-N-acetylglucosamine--N-acetylmuramyl-(pentapeptide) pyrophosphoryl-undecaprenol N-acetylglucosamine transferase.